A 655-amino-acid chain; its full sequence is p-hydroxybenzoic acid efflux pump subunit AaeB (655 aa).

A run of 11 helical transmembrane segments spans residues 13–33 (FAVKLACAIVLALFIGFHFQL), 38–58 (WAVLTAAIVAAGPAFAAGGEP), 69–89 (LRIIGTFIGCIAALIIIISMI), 93–113 (LLMILVCCVWAGFCTWISSLV), 121–141 (WGLSGYTALIIVITIQTEPLL), 152–172 (EIVIGIGCAILADLLFSPRSI), 370–390 (LFWLWTGWTSGNGAMVMIAVV), 407–427 (FIYGTLAALPLGLLYFLVIIP), 431–451 (QSMLLLCLSLAVLGFFIGIEV), 459–479 (MGALASTINIIVLDNPMTFHF), and 482–502 (FLDSALGQIVGCMLAFIVILL).

It belongs to the aromatic acid exporter ArAE (TC 2.A.85) family.

It is found in the cell inner membrane. Forms an efflux pump with AaeA. Could function as a metabolic relief valve, allowing to eliminate certain compounds when they accumulate to high levels in the cell. In Salmonella enteritidis PT4 (strain P125109), this protein is p-hydroxybenzoic acid efflux pump subunit AaeB.